A 359-amino-acid chain; its full sequence is Alkanal monooxygenase alpha chain (359 aa).

The protein belongs to the bacterial luciferase oxidoreductase family. As to quaternary structure, heterodimer of an alpha and a beta chain.

It catalyses the reaction a long-chain fatty aldehyde + FMNH2 + O2 = a long-chain fatty acid + hnu + FMN + H2O + 2 H(+). In terms of biological role, light-emitting reaction in luminous bacteria. In Photorhabdus laumondii subsp. laumondii (strain DSM 15139 / CIP 105565 / TT01) (Photorhabdus luminescens subsp. laumondii), this protein is Alkanal monooxygenase alpha chain (luxA).